The chain runs to 94 residues: C-X-C motif chemokine 11-1 (94 aa).

Positions 1–19 (MKTVTALLLVSLAVVAIEG) are cleaved as a signal peptide. Disulfide bonds link Cys27-Cys54 and Cys29-Cys71.

This sequence belongs to the intercrine alpha (chemokine CxC) family.

Its subcellular location is the secreted. In terms of biological role, ligand for cxcr3.2. Chemotactic for macrophages. The protein is C-X-C motif chemokine 11-1 (cxcl11.1) of Danio rerio (Zebrafish).